Here is a 155-residue protein sequence, read N- to C-terminus: SsrA-binding protein (155 aa).

Belongs to the SmpB family.

It localises to the cytoplasm. Its function is as follows. Required for rescue of stalled ribosomes mediated by trans-translation. Binds to transfer-messenger RNA (tmRNA), required for stable association of tmRNA with ribosomes. tmRNA and SmpB together mimic tRNA shape, replacing the anticodon stem-loop with SmpB. tmRNA is encoded by the ssrA gene; the 2 termini fold to resemble tRNA(Ala) and it encodes a 'tag peptide', a short internal open reading frame. During trans-translation Ala-aminoacylated tmRNA acts like a tRNA, entering the A-site of stalled ribosomes, displacing the stalled mRNA. The ribosome then switches to translate the ORF on the tmRNA; the nascent peptide is terminated with the 'tag peptide' encoded by the tmRNA and targeted for degradation. The ribosome is freed to recommence translation, which seems to be the essential function of trans-translation. The polypeptide is SsrA-binding protein (Streptococcus equi subsp. zooepidemicus (strain H70)).